The following is a 419-amino-acid chain: Putative competence-damage inducible protein (419 aa).

The protein belongs to the CinA family.

The chain is Putative competence-damage inducible protein from Streptococcus agalactiae serotype III (strain NEM316).